The following is a 264-amino-acid chain: Versicolorin reductase stcU (264 aa).

The NADP(+) site is built by isoleucine 23, aspartate 69, asparagine 96, and arginine 129. Catalysis depends on proton donor residues serine 145 and serine 146. Tyrosine 160, lysine 164, isoleucine 193, and threonine 195 together coordinate NADP(+). Residue tyrosine 160 is the Proton acceptor of the active site. The Lowers pKa of active site Tyr role is filled by lysine 164.

The protein belongs to the short-chain dehydrogenases/reductases (SDR) family.

It catalyses the reaction (4S,8R)-2,13,16,20-tetrahydroxy-7,9-dioxapentacyclo[10.8.0.0(3,10).0(4,8).0(14,19)]icosa-1(12),2,5,10,13,16,19-heptaen-18-one + NADPH + H(+) = (4S,8R,16R)-2,13,16,20-tetrahydroxy-7,9-dioxapentacyclo[10.8.0.0(3,10).0(4,8).0(14,19)]icosa-1(12),2,5,10,13,19-hexaen-18-one + NADP(+). The protein operates within mycotoxin biosynthesis; sterigmatocystin biosynthesis. In terms of biological role, versicolorin reductase; part of the gene cluster that mediates the biosynthesis of sterigmatocystin (ST), a polyketide-derived furanocoumarin which is part of the most toxic and carcinogenic compounds among the known mycotoxins. The first step in the biosynthesis of sterigmatocystin is the production of hexanoate by the fatty acid synthase (FAS) units stcJ and stcK. The polyketide backbone is assembled by the non-reducing polyketide synthase stcA by condensation of the starter hexanoyl-CoA and 7 malonyl-CoA extender units followed by cyclization and release of norsolorinic acid. Norsolorinic acid is the first stable intermediate in the biosynthesis of sterigmatocystin and is converted into averantin (AVN) by the ketoreductase stcE which reduces the hexanoate ketone to an alcohol. Averantin is then oxidized into 5'-hydroxyaverantin (HAVN) by the cytochrome P450 monooxygenase stcF. 5'-hydroxyaverantin is further converted to 5'-oxyaverantin (OAVN) by the 5'-hydroxyaverantin dehydrogenase stcG. The next step is the conversion of OAVN into averufin (AVF) which is catalyzed by a yet to be identified enzyme. The cytochrome P450 monooxygenase stcB and the flavin-binding monooxygenase stcW are both required for the conversion of averufin to 1-hydroxyversicolorone. The esterase stcI probably catalyzes the formation of versiconal hemiacetal acetate from 1-hydroxyversicolorone. The oxydoreductase stcN then probably catalyzes the biosynthetic step from versiconal to versicolorin B (VERB). The next step is performed by the versicolorin B desaturase stcL to produce versicolorin A (VERA). The ketoreductase stcU and the cytochrome P450 monooxygenase stcS are involved in the conversion of versicolorin A to demethylsterigmatocystin. The Baeyer-Villiger oxidas stcQ and the reductase stcR might be involved in the biosynthetic step from versicolorin A to demethylsterigmatocystin. The final step in the biosynthesis of sterigmatocystin is the methylation of demethylsterigmatocystin catalyzed by the methyltransferase stcP. This chain is Versicolorin reductase stcU, found in Emericella nidulans (strain FGSC A4 / ATCC 38163 / CBS 112.46 / NRRL 194 / M139) (Aspergillus nidulans).